The chain runs to 537 residues: Chaperonin GroEL 1 (537 aa).

Residues 29–32, 86–90, glycine 413, and aspartate 494 each bind ATP; these read TLGP and DGTTT.

It belongs to the chaperonin (HSP60) family. As to quaternary structure, forms a cylinder of 14 subunits composed of two heptameric rings stacked back-to-back. Interacts with the co-chaperonin GroES.

Its subcellular location is the cytoplasm. The enzyme catalyses ATP + H2O + a folded polypeptide = ADP + phosphate + an unfolded polypeptide.. In terms of biological role, together with its co-chaperonin GroES, plays an essential role in assisting protein folding. The GroEL-GroES system forms a nano-cage that allows encapsulation of the non-native substrate proteins and provides a physical environment optimized to promote and accelerate protein folding. The chain is Chaperonin GroEL 1 from Mycobacterium leprae (strain TN).